The primary structure comprises 379 residues: UDP-4-amino-4-deoxy-L-arabinose--oxoglutarate aminotransferase (379 aa).

Lysine 182 carries the N6-(pyridoxal phosphate)lysine modification.

The protein belongs to the DegT/DnrJ/EryC1 family. ArnB subfamily. Homodimer. Pyridoxal 5'-phosphate is required as a cofactor.

The enzyme catalyses UDP-4-amino-4-deoxy-beta-L-arabinose + 2-oxoglutarate = UDP-beta-L-threo-pentopyranos-4-ulose + L-glutamate. Its pathway is nucleotide-sugar biosynthesis; UDP-4-deoxy-4-formamido-beta-L-arabinose biosynthesis; UDP-4-deoxy-4-formamido-beta-L-arabinose from UDP-alpha-D-glucuronate: step 2/3. The protein operates within bacterial outer membrane biogenesis; lipopolysaccharide biosynthesis. In terms of biological role, catalyzes the conversion of UDP-4-keto-arabinose (UDP-Ara4O) to UDP-4-amino-4-deoxy-L-arabinose (UDP-L-Ara4N). The modified arabinose is attached to lipid A and is required for resistance to polymyxin and cationic antimicrobial peptides. The sequence is that of UDP-4-amino-4-deoxy-L-arabinose--oxoglutarate aminotransferase from Escherichia coli O1:K1 / APEC.